Reading from the N-terminus, the 562-residue chain is Putative transport protein ECA2683 (562 aa).

6 helical membrane passes run 8–28 (LLNG…LCLG), 32–52 (LGPV…LLGQ), 66–86 (FMLF…SIFF), 93–113 (FMLA…LGKL), 116–136 (WGIG…PVLV), and 158–178 (HLSL…IFGA). 2 consecutive RCK C-terminal domains span residues 202–288 (LDVD…NFRD) and 290–373 (KEVF…RIGF). 5 helical membrane-spanning segments follow: residues 383–403 (LLAF…TIQF), 406–426 (FTFG…LGFL), 447–467 (FGLM…INSS), 478–498 (SGLI…AYVL), and 537–557 (GTYA…VVIW).

Belongs to the AAE transporter (TC 2.A.81) family. YbjL subfamily.

It localises to the cell membrane. The protein is Putative transport protein ECA2683 of Pectobacterium atrosepticum (strain SCRI 1043 / ATCC BAA-672) (Erwinia carotovora subsp. atroseptica).